We begin with the raw amino-acid sequence, 250 residues long: 2,3-bisphosphoglycerate-dependent phosphoglycerate mutase (250 aa).

Substrate is bound by residues R10–N17, T23–G24, R62, E89–Y92, K100, R116–R117, and G185–N186. H11 serves as the catalytic Tele-phosphohistidine intermediate. Catalysis depends on E89, which acts as the Proton donor/acceptor.

This sequence belongs to the phosphoglycerate mutase family. BPG-dependent PGAM subfamily. As to quaternary structure, homodimer.

It carries out the reaction (2R)-2-phosphoglycerate = (2R)-3-phosphoglycerate. It participates in carbohydrate degradation; glycolysis; pyruvate from D-glyceraldehyde 3-phosphate: step 3/5. Functionally, catalyzes the interconversion of 2-phosphoglycerate and 3-phosphoglycerate. This Salmonella paratyphi A (strain ATCC 9150 / SARB42) protein is 2,3-bisphosphoglycerate-dependent phosphoglycerate mutase.